The sequence spans 536 residues: Enterobactin synthase component E (536 aa).

Positions 235, 240, 309, 331, 335, 415, and 432 each coordinate substrate. Positions 438 to 439 (GG) are phosphopantetheine binding. Lys-441 serves as a coordination point for substrate.

The protein belongs to the ATP-dependent AMP-binding enzyme family. EntE subfamily. Proteins EntB, EntD, EntE, and EntF form a multienzyme complex called enterobactin synthase. Monomer. EntA and EntE interact together.

Its subcellular location is the membrane. The catalysed reaction is 3 2,3-dihydroxybenzoate + 3 L-serine + 6 ATP = enterobactin + 6 AMP + 6 diphosphate + 4 H(+). The enzyme catalyses 2,3-dihydroxybenzoate + holo-[ACP] + ATP = 2,3-dihydroxybenzoyl-[ACP] + AMP + diphosphate. It catalyses the reaction 2,3-dihydroxybenzoyl-5'-AMP + holo-[ACP] = 2,3-dihydroxybenzoyl-[ACP] + AMP + H(+). It functions in the pathway siderophore biosynthesis; enterobactin biosynthesis. Its activity is regulated as follows. Inhibited by the adenylate analogs, 5'-O-[N-(salicyl)sulfamoyl]adenosine (Sal-AMS) and 5'-O-[N-(2,3-dihydroxybenzoyl)sulfamoyl]adenosine (DHB-AMS). Adenylation of 2,3-dihydroxybenzoate (DHB) is enhanced by a protein-protein interaction between the EntA and EntE. Functionally, involved in the biosynthesis of the siderophore enterobactin (enterochelin), which is a macrocyclic trimeric lactone of N-(2,3-dihydroxybenzoyl)-serine. The serine trilactone serves as a scaffolding for the three catechol functionalities that provide hexadentate coordination for the tightly ligated iron(2+) atoms. EntE processes via a two-step adenylation-ligation reaction (bi-uni-uni-bi ping-pong mechanism). First, it catalyzes the activation of the carboxylate group of 2,3-dihydroxy-benzoate (DHB), via a reversible ATP-dependent pyrophosphate exchange reactions to yield the acyladenylate intermediate 2,3-dihydroxybenzoyl-AMP. It can also transfer AMP to salicylate, 2,4-dihydroxybenzoate, gentisate and 2,3,4-trihydroxybenzoate. In the second step, DHB is transferred from 2,3-dihydroxybenzoyl-AMP onto the phosphopantetheinylated EntB (holo-EntB) to form DHB-holo-EntB. Then this product will serve in the formation of the amide bond between 2,3-dihydroxybenzoate (DHB) and L-serine. It can also transfer adenylated salicylate to holo-EntB. The sequence is that of Enterobactin synthase component E from Escherichia coli (strain K12).